The primary structure comprises 64 residues: Defensin beta 4A (64 aa).

A signal peptide spans M1 to G23. 3 cysteine pairs are disulfide-bonded: C31–C60, C38–C53, and C43–C61. The phosphatidylinositol 4,5-bisphosphate (PIP2) binding stretch occupies residues K33 to K48.

It belongs to the beta-defensin family. LAP/TAP subfamily. In terms of assembly, monomer. Homodimer.

It is found in the secreted. In terms of biological role, exhibits antimicrobial activity against Gram-negative bacteria and Gram-positive bacteria, with highest activity against Gram-negative bacteria. Antimicrobial activity against P.aruginosa seems to be salt-sensitive and is reduced with high salt concentrations greater than 25 mM. Also exhibits antimicrobial activity against the yeast C.albicans. Permeabilizes C.albicans cell membranes via targeting plasma membrane lipid phosphatidylinositol 4,5-bisphosphate (PIP2), thereby leading to cell fragmentation and cell death. Acts as a ligand for C-C chemokine receptor CCR6. Binds to CCR6 and induces chemotactic activity of CCR6-expressing cells, such as immature dendritic cells and memory T cells. The polypeptide is Defensin beta 4A (DEFB4A) (Macaca mulatta (Rhesus macaque)).